The following is a 275-amino-acid chain: 3-methyl-2-oxobutanoate hydroxymethyltransferase (275 aa).

Residues Asp-51 and Asp-90 each coordinate Mg(2+). 3-methyl-2-oxobutanoate is bound by residues 51–52 (DS), Asp-90, and Lys-120. Glu-122 is a Mg(2+) binding site. The Proton acceptor role is filled by Glu-189.

This sequence belongs to the PanB family. Homodecamer; pentamer of dimers. Mg(2+) serves as cofactor.

The protein resides in the cytoplasm. It carries out the reaction 3-methyl-2-oxobutanoate + (6R)-5,10-methylene-5,6,7,8-tetrahydrofolate + H2O = 2-dehydropantoate + (6S)-5,6,7,8-tetrahydrofolate. The protein operates within cofactor biosynthesis; (R)-pantothenate biosynthesis; (R)-pantoate from 3-methyl-2-oxobutanoate: step 1/2. Its function is as follows. Catalyzes the reversible reaction in which hydroxymethyl group from 5,10-methylenetetrahydrofolate is transferred onto alpha-ketoisovalerate to form ketopantoate. In Caulobacter vibrioides (strain ATCC 19089 / CIP 103742 / CB 15) (Caulobacter crescentus), this protein is 3-methyl-2-oxobutanoate hydroxymethyltransferase.